We begin with the raw amino-acid sequence, 154 residues long: 6,7-dimethyl-8-ribityllumazine synthase (154 aa).

5-amino-6-(D-ribitylamino)uracil-binding positions include phenylalanine 26, 60-62 (ALE), and 84-86 (CII). 89–90 (ET) lines the (2S)-2-hydroxy-3-oxobutyl phosphate pocket. The Proton donor role is filled by histidine 92. Asparagine 117 provides a ligand contact to 5-amino-6-(D-ribitylamino)uracil. (2S)-2-hydroxy-3-oxobutyl phosphate is bound at residue arginine 131.

It belongs to the DMRL synthase family.

It carries out the reaction (2S)-2-hydroxy-3-oxobutyl phosphate + 5-amino-6-(D-ribitylamino)uracil = 6,7-dimethyl-8-(1-D-ribityl)lumazine + phosphate + 2 H2O + H(+). Its pathway is cofactor biosynthesis; riboflavin biosynthesis; riboflavin from 2-hydroxy-3-oxobutyl phosphate and 5-amino-6-(D-ribitylamino)uracil: step 1/2. Catalyzes the formation of 6,7-dimethyl-8-ribityllumazine by condensation of 5-amino-6-(D-ribitylamino)uracil with 3,4-dihydroxy-2-butanone 4-phosphate. This is the penultimate step in the biosynthesis of riboflavin. The chain is 6,7-dimethyl-8-ribityllumazine synthase from Polaromonas sp. (strain JS666 / ATCC BAA-500).